We begin with the raw amino-acid sequence, 664 residues long: Trifunctional UDP-glucose 4,6-dehydratase/UDP-4-keto-6-deoxy-D-glucose 3,5-epimerase/UDP-4-keto-L-rhamnose-reductase RHM3 (664 aa).

NAD(+) is bound at residue 13 to 19 (GAAGFIA). T132 provides a ligand contact to substrate. The active-site Proton donor is the D133. Residues E134 and Y159 each act as proton acceptor in the active site. An NADP(+)-binding site is contributed by 386–392 (GKTGWLG).

In the N-terminal section; belongs to the NAD(P)-dependent epimerase/dehydratase family. dTDP-glucose dehydratase subfamily. This sequence in the C-terminal section; belongs to the dTDP-4-dehydrorhamnose reductase family. NAD(+) serves as cofactor. NADP(+) is required as a cofactor. Expressed in roots, stems, seedlings, and siliques. Lower expression in inflorescence tips, and leaves.

The catalysed reaction is UDP-alpha-D-glucose = UDP-4-dehydro-6-deoxy-alpha-D-glucose + H2O. Its pathway is carbohydrate biosynthesis. Functionally, trifunctional enzyme involved in UDP-beta-L-rhamnose biosynthesis, a precursor of the primary cell wall components rhamnogalacturonan I (RG-I) and rhamnogalacturonan II (RG-II). Catalyzes the dehydration of UDP-glucose to form UDP-4-dehydro-6-deoxy-D-glucose followed by the epimerization of the C3' and C5' positions of UDP-4-dehydro-6-deoxy-D-glucose to form UDP-4-keto-beta-L-rhamnose and the reduction of UDP-4-keto-beta-L-rhamnose to yield UDP-beta-L-rhamnose. This is Trifunctional UDP-glucose 4,6-dehydratase/UDP-4-keto-6-deoxy-D-glucose 3,5-epimerase/UDP-4-keto-L-rhamnose-reductase RHM3 from Arabidopsis thaliana (Mouse-ear cress).